The sequence spans 118 residues: Large ribosomal subunit protein bL19 (118 aa).

The protein belongs to the bacterial ribosomal protein bL19 family.

Its function is as follows. This protein is located at the 30S-50S ribosomal subunit interface and may play a role in the structure and function of the aminoacyl-tRNA binding site. The protein is Large ribosomal subunit protein bL19 of Campylobacter fetus subsp. fetus (strain 82-40).